Reading from the N-terminus, the 215-residue chain is 3-demethoxyubiquinol 3-hydroxylase (215 aa).

Residues E64, E94, H97, E146, E178, and H181 each contribute to the Fe cation site.

The protein belongs to the COQ7 family. The cofactor is Fe cation.

The protein localises to the cell membrane. The catalysed reaction is a 5-methoxy-2-methyl-3-(all-trans-polyprenyl)benzene-1,4-diol + AH2 + O2 = a 3-demethylubiquinol + A + H2O. It functions in the pathway cofactor biosynthesis; ubiquinone biosynthesis. In terms of biological role, catalyzes the hydroxylation of 2-nonaprenyl-3-methyl-6-methoxy-1,4-benzoquinol during ubiquinone biosynthesis. This chain is 3-demethoxyubiquinol 3-hydroxylase, found in Pseudomonas putida (strain GB-1).